The chain runs to 358 residues: uncharacterized protein (358 aa).

Positions 1–15 (MITGKTISLPLSVIA) are cleaved as a signal peptide. Cys16 carries the N-palmitoyl cysteine lipid modification. Cys16 is lipidated: S-diacylglycerol cysteine. The interval 331–358 (PCGTGSPGNPPPNINSVAQHRISTNTNR) is disordered. Residues 347-358 (VAQHRISTNTNR) show a composition bias toward polar residues.

It localises to the cell membrane. This is an uncharacterized protein from Sinorhizobium fredii (strain NBRC 101917 / NGR234).